The sequence spans 900 residues: Phosphoenolpyruvate carboxylase (900 aa).

Active-site residues include His-140 and Lys-568.

This sequence belongs to the PEPCase type 1 family. It depends on Mg(2+) as a cofactor.

The enzyme catalyses oxaloacetate + phosphate = phosphoenolpyruvate + hydrogencarbonate. Functionally, forms oxaloacetate, a four-carbon dicarboxylic acid source for the tricarboxylic acid cycle. This chain is Phosphoenolpyruvate carboxylase, found in Neisseria meningitidis serogroup C / serotype 2a (strain ATCC 700532 / DSM 15464 / FAM18).